A 413-amino-acid polypeptide reads, in one-letter code: Probable isoleucine--tRNA ligase, mitochondrial (413 aa).

Residues Lys-298–Ser-302 carry the 'KMSKS' region motif. Lys-301 lines the ATP pocket.

This sequence belongs to the class-I aminoacyl-tRNA synthetase family.

It localises to the mitochondrion matrix. It carries out the reaction tRNA(Ile) + L-isoleucine + ATP = L-isoleucyl-tRNA(Ile) + AMP + diphosphate. This is Probable isoleucine--tRNA ligase, mitochondrial from Ciona intestinalis (Transparent sea squirt).